Here is a 166-residue protein sequence, read N- to C-terminus: Large ribosomal subunit protein uL10 (166 aa).

Belongs to the universal ribosomal protein uL10 family. Part of the ribosomal stalk of the 50S ribosomal subunit. The N-terminus interacts with L11 and the large rRNA to form the base of the stalk. The C-terminus forms an elongated spine to which L12 dimers bind in a sequential fashion forming a multimeric L10(L12)X complex.

Its function is as follows. Forms part of the ribosomal stalk, playing a central role in the interaction of the ribosome with GTP-bound translation factors. The protein is Large ribosomal subunit protein uL10 of Stutzerimonas stutzeri (strain A1501) (Pseudomonas stutzeri).